We begin with the raw amino-acid sequence, 217 residues long: MGKEDDRGEEYLFKIVLIGDSAVGKSNLLSRFSRDEFDTNSKATIGVEFQTQLVEIEGKEVKAQIWDTAGQERFRAVTSAYYRGAFGALIVYDITRGDTFESVKRWLQELNTHCDTAVAQMLVGNKCDLEDIRAVSVEEGKALAEEEGLFFMETSALDATNVDKAFEIVIREIFNNVSRKLLNSDAYKAELSVNRVSLVNNQDGSESSWRNPSCCSR.

GTP is bound at residue 19–26 (GDSAVGKS). The Effector region motif lies at 41 to 49 (SKATIGVEF). GTP contacts are provided by residues 67 to 71 (DTAGQ), 125 to 128 (NKCD), and 155 to 156 (SA). 2 S-geranylgeranyl cysteine lipidation sites follow: C214 and C215.

It belongs to the small GTPase superfamily. Rab family.

The protein localises to the cell membrane. Functionally, intracellular vesicle trafficking and protein transport. The sequence is that of Ras-related protein RABA5b (RABA5B) from Arabidopsis thaliana (Mouse-ear cress).